A 184-amino-acid polypeptide reads, in one-letter code: NADH-quinone oxidoreductase subunit B 2 (184 aa).

Residues Cys-59, Cys-60, Cys-125, and Cys-153 each coordinate [4Fe-4S] cluster.

It belongs to the complex I 20 kDa subunit family. NDH-1 is composed of 14 different subunits. Subunits NuoB, C, D, E, F, and G constitute the peripheral sector of the complex. It depends on [4Fe-4S] cluster as a cofactor.

The protein localises to the cell inner membrane. The catalysed reaction is a quinone + NADH + 5 H(+)(in) = a quinol + NAD(+) + 4 H(+)(out). NDH-1 shuttles electrons from NADH, via FMN and iron-sulfur (Fe-S) centers, to quinones in the respiratory chain. Couples the redox reaction to proton translocation (for every two electrons transferred, four hydrogen ions are translocated across the cytoplasmic membrane), and thus conserves the redox energy in a proton gradient. The chain is NADH-quinone oxidoreductase subunit B 2 from Solibacter usitatus (strain Ellin6076).